The primary structure comprises 555 residues: Glutamine--tRNA ligase (555 aa).

The 'HIGH' region signature appears at 34–44; the sequence is PEPNGYLHIGH. ATP-binding positions include 35–37 and 41–47; these read EPN and HIGHAKS. Residues aspartate 67 and tyrosine 212 each contribute to the L-glutamine site. Residues threonine 231, 261–262, and 269–271 each bind ATP; these read RL and MSK. Residues 268-272 carry the 'KMSKS' region motif; it reads VMSKR. The interaction with tRNA stretch occupies residues 317–324; the sequence is TKQDNTIE.

Belongs to the class-I aminoacyl-tRNA synthetase family. Monomer.

The protein localises to the cytoplasm. The catalysed reaction is tRNA(Gln) + L-glutamine + ATP = L-glutaminyl-tRNA(Gln) + AMP + diphosphate. This is Glutamine--tRNA ligase from Salmonella schwarzengrund (strain CVM19633).